Consider the following 99-residue polypeptide: Beta-defensin 127 (99 aa).

Positions 1 to 20 (MGLFMIIAILLFQKPTVTEQ) are cleaved as a signal peptide. Disulfide bonds link Cys24/Cys53, Cys33/Cys47, and Cys37/Cys54. The propeptide occupies 66–99 (ITKPPRPKPATLALTLQDYVTIIENFPSLKTQST).

Belongs to the beta-defensin family.

Its subcellular location is the secreted. In terms of biological role, has antibacterial activity. This chain is Beta-defensin 127 (DEFB127), found in Homo sapiens (Human).